The primary structure comprises 1224 residues: Tyrosine-protein kinase abl-1 (1224 aa).

The SH3 domain occupies 115–188 (SSAPLFVALY…PSNFIAPYNS (74 aa)). The SH2 domain maps to 194–284 (WYHGKISRSD…GLICLLMYPA (91 aa)). The region spanning 311–562 (IIMHNKLGGG…PRFRDIHFNL (252 aa)) is the Protein kinase domain. ATP-binding positions include 317–325 (LGGGQYGDV), Lys-340, and 385–391 (EFMCNGN). Asp-432 acts as the Proton acceptor in catalysis. The Kinase activation loop signature appears at 450-474 (DFGLARFMKEDTYTAHAGAKFPIKW). Basic and acidic residues predominate over residues 579-620 (LKKNNDKKLESDKRRSNVRERSDSKSRHSSHHDRDRDRESLH). Disordered regions lie at residues 579 to 671 (LKKN…NTKP), 736 to 775 (KESTDADNEGAGSSSLSRTVSNDSLDTLPLPDSMNSSTYV), 796 to 881 (KRSE…DVGM), 914 to 937 (LRHVPKEESNTSSQEDLPLDATDN), and 968 to 1016 (RPFS…RSNG). 2 stretches are compositionally biased toward polar residues: residues 639 to 655 (SVSFFNPSTTSKVTSFR) and 746 to 760 (AGSSSLSRTVSNDSL). Basic and acidic residues-rich tracts occupy residues 797–819 (RSETPELDHIDSDTADETTKSEK) and 864–877 (PDSKAEDSSDETTK). A compositionally biased stretch (polar residues) spans 973–984 (QCPNNSTSSAIS). The span at 1001–1016 (YEERMKPELPRKRSNG) shows a compositional bias: basic and acidic residues.

Belongs to the protein kinase superfamily. Tyr protein kinase family. ABL subfamily. Interacts (via SH2 and SH3 domains) with mig-13; the interaction is direct. May interact with soem-1.

Its subcellular location is the cell membrane. The protein resides in the cytoplasm. It carries out the reaction L-tyrosyl-[protein] + ATP = O-phospho-L-tyrosyl-[protein] + ADP + H(+). Its function is as follows. Functions downstream of migratory protein mig-13 and is involved in Q neuroblast migration during larval development. Recruited by mig-13 to the leading edge of Q neuroblasts and their descendents to signal downstream, likely to the wve-1 pathway, and direct migration along the anteroposterior body axis. Promotes germline cell apoptosis in response to oxidative, osmotic and heat shock stresses. This chain is Tyrosine-protein kinase abl-1 (abl-1), found in Caenorhabditis elegans.